Consider the following 158-residue polypeptide: Persistence and stress-resistance toxin PasT (158 aa).

Residues 70–158 (GISKTFTTRN…VRAKEVYSAR (89 aa)) are required for resistance of nitrosative stress but not persistence or toxic effects.

This sequence belongs to the ribosome association toxin RatA family. Associates with 50S ribosomes.

Functionally, toxic component of a type II toxin-antitoxin (TA) system. Binds to 50S ribosomal subunits, preventing them from associating with 30S subunits to form 70S ribosomes. In this strain of E.coli low levels of PasT complement operon disruption, however high levels are toxic; their effects are abrogated by high level expression of cognate antitoxin PasI. Plays a role in persistence after antibiotic exposure and survival of nitrosative stress; the toxic and persistence phenotypes are conferred by the same N-terminal region of the protein, while the stress resistance effects can be uncoupled from them in deletion mutants. This chain is Persistence and stress-resistance toxin PasT (pasT), found in Escherichia coli O6:H1 (strain CFT073 / ATCC 700928 / UPEC).